The sequence spans 204 residues: Imidazoleglycerol-phosphate dehydratase (204 aa).

The protein belongs to the imidazoleglycerol-phosphate dehydratase family.

It localises to the cytoplasm. The enzyme catalyses D-erythro-1-(imidazol-4-yl)glycerol 3-phosphate = 3-(imidazol-4-yl)-2-oxopropyl phosphate + H2O. It functions in the pathway amino-acid biosynthesis; L-histidine biosynthesis; L-histidine from 5-phospho-alpha-D-ribose 1-diphosphate: step 6/9. The protein is Imidazoleglycerol-phosphate dehydratase of Rhodococcus opacus (strain B4).